Here is a 430-residue protein sequence, read N- to C-terminus: Serine--tRNA ligase (430 aa).

235–237 contacts L-serine; it reads TAE. ATP-binding positions include 266–268 and Val-282; that span reads RRE. Residue Glu-289 participates in L-serine binding. 353–356 contacts ATP; it reads EASS. Ser-389 is a binding site for L-serine.

This sequence belongs to the class-II aminoacyl-tRNA synthetase family. Type-1 seryl-tRNA synthetase subfamily. In terms of assembly, homodimer. The tRNA molecule binds across the dimer.

The protein resides in the cytoplasm. The enzyme catalyses tRNA(Ser) + L-serine + ATP = L-seryl-tRNA(Ser) + AMP + diphosphate + H(+). It carries out the reaction tRNA(Sec) + L-serine + ATP = L-seryl-tRNA(Sec) + AMP + diphosphate + H(+). The protein operates within aminoacyl-tRNA biosynthesis; selenocysteinyl-tRNA(Sec) biosynthesis; L-seryl-tRNA(Sec) from L-serine and tRNA(Sec): step 1/1. Catalyzes the attachment of serine to tRNA(Ser). Is also able to aminoacylate tRNA(Sec) with serine, to form the misacylated tRNA L-seryl-tRNA(Sec), which will be further converted into selenocysteinyl-tRNA(Sec). In Chlorobium phaeovibrioides (strain DSM 265 / 1930) (Prosthecochloris vibrioformis (strain DSM 265)), this protein is Serine--tRNA ligase.